The chain runs to 665 residues: Long chain acyl-CoA synthetase 2 (665 aa).

An ATP-binding site is contributed by 228-239; sequence IMYTSGTTGEPK. The tract at residues 496 to 520 is fatty acid-binding; that stretch reads DGWFHTGDIGEWQEDGSMKIIDRKK.

This sequence belongs to the ATP-dependent AMP-binding enzyme family. Mg(2+) is required as a cofactor. As to expression, expressed along the entire length of the stem, but expression was not entirely epidermal specific, with some expression found in internal cell layers as well. Was expressed in leave epidermal cells, flowers (sepals, petals, stamens, filaments and carpel), siliques and developing seeds. In roots, expression was detected in an internal cell layer, probably the endodermal layer.

The protein resides in the endoplasmic reticulum. It carries out the reaction a long-chain fatty acid + ATP + CoA = a long-chain fatty acyl-CoA + AMP + diphosphate. The protein operates within lipid metabolism; fatty acid metabolism. In terms of biological role, activation of long-chain fatty acids for both synthesis of cellular lipids, and degradation via beta-oxidation. Acts in the cutin pathway. Preferentially uses palmitate, palmitoleate, oleate and linoleate. Required for repression of lateral root formation through its role in cutin biosynthesis and subsequent aerial tissues permeability. This is Long chain acyl-CoA synthetase 2 (LACS2) from Arabidopsis thaliana (Mouse-ear cress).